The following is a 614-amino-acid chain: Sodium- and chloride-dependent betaine transporter (614 aa).

The Cytoplasmic portion of the chain corresponds to 1–44 (MDRKVTVHEDGCPVVSWVPEEGEMMDQKDKDQVKDRGQWTNKME). Helical transmembrane passes span 45 to 65 (FVLS…FPYL), 73 to 92 (AFFI…VFFL), and 117 to 137 (GIGM…IIIL). Residues 138–210 (AWALFYLFSS…SGIHDLGSLR (73 aa)) are Extracellular-facing. Residues Asn171 and Asn183 are each glycosylated (N-linked (GlcNAc...) asparagine). 9 consecutive transmembrane segments (helical) span residues 211-229 (WELA…FCIW), 238-255 (VVYF…ILLI), 291-308 (IFFS…LGSY), 320-341 (IALC…FSIL), 374-393 (MPLS…FLGL), 423-441 (LLIL…LLVT), 458-478 (GICL…VYGA), 499-518 (ISWL…FSLS), and 538-556 (IGWL…FIII). At 557–614 (TLLKTQGSFKKRLQRLITPDPSLPQPGRRSPQDGSSAQNCSTSPVKQELIAWEKETHL) the chain is on the cytoplasmic side. A disordered region spans residues 574–600 (TPDPSLPQPGRRSPQDGSSAQNCSTSP). The residue at position 586 (Ser586) is a Phosphoserine. Residues 588–600 (QDGSSAQNCSTSP) are compositionally biased toward polar residues.

This sequence belongs to the sodium:neurotransmitter symporter (SNF) (TC 2.A.22) family. SLC6A12 subfamily. In terms of assembly, interacts with LIN7C.

It localises to the basolateral cell membrane. Its subcellular location is the cell membrane. The catalysed reaction is 4-aminobutanoate(out) + chloride(out) + 3 Na(+)(out) = 4-aminobutanoate(in) + chloride(in) + 3 Na(+)(in). The enzyme catalyses glycine betaine(out) + 2 chloride(out) + 3 Na(+)(out) = glycine betaine(in) + 2 chloride(in) + 3 Na(+)(in). In terms of biological role, transporter that mediates cellular uptake of betaine and GABA in a sodium- and chloride-dependent process. May have a role in regulation of GABAergic transmission in the brain through the reuptake of GABA into presynaptic terminals, as well as in osmotic regulation. Probably also involved in renal and hepatic osmotic regulation. This Rattus norvegicus (Rat) protein is Sodium- and chloride-dependent betaine transporter (Slc6a12).